Reading from the N-terminus, the 282-residue chain is D-alanine aminotransferase (282 aa).

Tyr32 contacts substrate. Residue Arg51 coordinates pyridoxal 5'-phosphate. Substrate contacts are provided by Arg99 and His101. The Proton acceptor role is filled by Lys146. Lys146 bears the N6-(pyridoxal phosphate)lysine mark. Glu178 serves as a coordination point for pyridoxal 5'-phosphate.

Belongs to the class-IV pyridoxal-phosphate-dependent aminotransferase family. In terms of assembly, homodimer. The cofactor is pyridoxal 5'-phosphate.

The enzyme catalyses D-alanine + 2-oxoglutarate = D-glutamate + pyruvate. Functionally, acts on the D-isomers of alanine, leucine, aspartate, glutamate, aminobutyrate, norvaline and asparagine. The enzyme transfers an amino group from a substrate D-amino acid to the pyridoxal phosphate cofactor to form pyridoxamine and an alpha-keto acid in the first half-reaction. The second half-reaction is the reverse of the first, transferring the amino group from the pyridoxamine to a second alpha-keto acid to form the product D-amino acid via a ping-pong mechanism. This is an important process in the formation of D-alanine and D-glutamate, which are essential bacterial cell wall components. This chain is D-alanine aminotransferase (dat), found in Staphylococcus aureus (strain MW2).